The sequence spans 503 residues: Aspartyl/glutamyl-tRNA(Asn/Gln) amidotransferase subunit B (503 aa).

Belongs to the GatB/GatE family. GatB subfamily. Heterotrimer of A, B and C subunits.

It carries out the reaction L-glutamyl-tRNA(Gln) + L-glutamine + ATP + H2O = L-glutaminyl-tRNA(Gln) + L-glutamate + ADP + phosphate + H(+). The enzyme catalyses L-aspartyl-tRNA(Asn) + L-glutamine + ATP + H2O = L-asparaginyl-tRNA(Asn) + L-glutamate + ADP + phosphate + 2 H(+). Functionally, allows the formation of correctly charged Asn-tRNA(Asn) or Gln-tRNA(Gln) through the transamidation of misacylated Asp-tRNA(Asn) or Glu-tRNA(Gln) in organisms which lack either or both of asparaginyl-tRNA or glutaminyl-tRNA synthetases. The reaction takes place in the presence of glutamine and ATP through an activated phospho-Asp-tRNA(Asn) or phospho-Glu-tRNA(Gln). The sequence is that of Aspartyl/glutamyl-tRNA(Asn/Gln) amidotransferase subunit B from Nocardia farcinica (strain IFM 10152).